The chain runs to 228 residues: Probable septum site-determining protein MinC (228 aa).

The protein belongs to the MinC family. Interacts with MinD and FtsZ.

In terms of biological role, cell division inhibitor that blocks the formation of polar Z ring septums. Rapidly oscillates between the poles of the cell to destabilize FtsZ filaments that have formed before they mature into polar Z rings. Prevents FtsZ polymerization. This chain is Probable septum site-determining protein MinC, found in Bacillus anthracis (strain A0248).